Consider the following 526-residue polypeptide: Microphthalmia-associated transcription factor (526 aa).

S5 bears the Phosphoserine; by MTOR mark. Disordered regions lie at residues 20-54 (EPKTYYELKSQPLKSSSSAEHSGASKPPLSSSTMT) and 155-179 (VLSSPCPNQPGDHAMPPVPGSSAPN). The segment covering 34–44 (SSSSAEHSGAS) has biased composition (low complexity). S180 is subject to Phosphoserine; by MAPK. The transactivation stretch occupies residues 224 to 291 (DDVIDDIISL…PANLPNIKRE (68 aa)). Position 280 is a phosphoserine (S280). K289 participates in a covalent cross-link: Glycyl lysine isopeptide (Lys-Gly) (interchain with G-Cter in SUMO). The bHLH domain maps to 311-364 (QKKDNHNLIERRRRFNINDRIKELGTLIPKSNDPDMRWNKGTILKASVDYIRKL). The stretch at 355–401 (KASVDYIRKLQREQQRAKDLENRQKKLEHANRHLLLRVQELEMQARA) forms a coiled coil. A leucine-zipper region spans residues 374–395 (LENRQKKLEHANRHLLLRVQEL). A DNA-binding regulation region spans residues 401 to 431 (AHGLSLIPSTGLCSPDLVNRIIKQEPVLENC). S405 carries the post-translational modification Phosphoserine; by GSK3. The residue at position 414 (S414) is a Phosphoserine. K423 participates in a covalent cross-link: Glycyl lysine isopeptide (Lys-Gly) (interchain with G-Cter in SUMO). S491 is modified (phosphoserine). The tract at residues 496-526 (TDPLLSSVSPGASKTSSRRSSMSAEETEHAC) is disordered. A compositionally biased stretch (low complexity) spans 507–519 (ASKTSSRRSSMSA). S516 is modified (phosphoserine; by RPS6KA1).

Belongs to the MiT/TFE family. As to quaternary structure, homodimer or heterodimer; dimerization is mediated via the coiled coil region. Efficient DNA binding requires dimerization with another bHLH protein. Binds DNA in the form of homodimer or heterodimer with either TFE3, TFEB or TFEC. Interacts with small GTPases Rag (RagA/RRAGA, RagB/RRAGB, RagC/RRAGC and/or RagD/RRAGD); promoting its recruitment to lysosomal membrane in the presence of nutrients. Interacts with KARS1. Identified in a complex with HINT1 and CTNNB1. Interacts with VSX2. When nutrients are present, phosphorylation by MTOR at Ser-5 via non-canonical mTORC1 pathway promotes ubiquitination by the SCF(BTRC) complex, followed by degradation. Phosphorylation at Ser-405 significantly enhances the ability to bind the tyrosinase promoter. Phosphorylation by MARK3/cTAK1 at Ser-280 promotes association with 14-3-3/YWHA adapters and retention in the cytosol. Phosphorylated at Ser-180 and Ser-516 following KIT signaling, triggering a short live activation: Phosphorylation at Ser-180 and Ser-516 by MAPK and RPS6KA1, respectively, activate the transcription factor activity but also promote ubiquitination and subsequent degradation by the proteasome. Phosphorylated in response to blue light (415nm). Post-translationally, ubiquitinated by the SCF(BTRC) and SCF(FBXW11) complexes following phosphorylation ar Ser-5 by MTOR, leading to its degradation by the proteasome. Ubiquitinated following phosphorylation at Ser-180, leading to subsequent degradation by the proteasome. Deubiquitinated by USP13, preventing its degradation. As to expression, in the adult, expressed at high levels in the heart, skin, skeletal muscle, intestine, stomach, kidney, ovary, lung, spleen and brain. In the embryo, expressed in developing eye, ear, skin and heart. Isoform M is expressed in melanocytes and also in the embryonic and adult heart while isoform A and isoform H are more widely expressed.

Its subcellular location is the nucleus. It localises to the cytoplasm. It is found in the lysosome membrane. Its function is as follows. Transcription factor that acts as a master regulator of melanocyte survival and differentiation as well as melanosome biogenesis. Binds to M-boxes (5'-TCATGTG-3') and symmetrical DNA sequences (E-boxes) (5'-CACGTG-3') found in the promoter of pigmentation genes, such as tyrosinase (TYR). Involved in the cellular response to amino acid availability by acting downstream of MTOR: in the presence of nutrients, MITF phosphorylation by MTOR promotes its inactivation. Upon starvation or lysosomal stress, inhibition of MTOR induces MITF dephosphorylation, resulting in transcription factor activity. Plays an important role in melanocyte development by regulating the expression of tyrosinase (TYR) and tyrosinase-related protein 1 (TYRP1). Plays a critical role in the differentiation of various cell types, such as neural crest-derived melanocytes, mast cells, osteoclasts and optic cup-derived retinal pigment epithelium. The protein is Microphthalmia-associated transcription factor (Mitf) of Mus musculus (Mouse).